A 270-amino-acid chain; its full sequence is Diaminopimelate epimerase (270 aa).

Substrate is bound by residues asparagine 15, glutamine 49, and asparagine 66. Cysteine 75 acts as the Proton donor in catalysis. Residues 76–77, asparagine 155, asparagine 187, and 204–205 contribute to the substrate site; these read GN and ER. Cysteine 213 acts as the Proton acceptor in catalysis. Residue 214–215 coordinates substrate; it reads GS.

This sequence belongs to the diaminopimelate epimerase family. Homodimer.

The protein resides in the cytoplasm. It carries out the reaction (2S,6S)-2,6-diaminopimelate = meso-2,6-diaminopimelate. It participates in amino-acid biosynthesis; L-lysine biosynthesis via DAP pathway; DL-2,6-diaminopimelate from LL-2,6-diaminopimelate: step 1/1. Functionally, catalyzes the stereoinversion of LL-2,6-diaminopimelate (L,L-DAP) to meso-diaminopimelate (meso-DAP), a precursor of L-lysine and an essential component of the bacterial peptidoglycan. The polypeptide is Diaminopimelate epimerase (Rickettsia massiliae (strain Mtu5)).